We begin with the raw amino-acid sequence, 1161 residues long: PAN2-PAN3 deadenylation complex catalytic subunit pan2 (1161 aa).

2 WD repeats span residues 20–59 (GLPT…RYTS) and 276–315 (ANVS…HFNE). Residues 316-452 (MSKEVEFADV…GAKLNGEAED (137 aa)) form a linker region. The 370-residue stretch at 453–822 (DPLLKYSNVE…SPCILAYQAK (370 aa)) folds into the USP domain. The 179-residue stretch at 871–1049 (VALDTEFVDL…IEDARMALRL (179 aa)) folds into the Exonuclease domain. Positions 874, 876, 983, and 1042 each coordinate a divalent metal cation. A WD 4 repeat occupies 1009–1060 (NRRLSLRYLAWAVFKEYIQEEPADNNQGHDSIEDARMALRLWKKFQEYEDAG). The disordered stretch occupies residues 1092–1161 (RPGTAVTMQN…GDFFGGSPLK (70 aa)). The segment covering 1097–1110 (VTMQNSSGRNTPST) has biased composition (polar residues). Positions 1116–1129 (AATATATTSAPATP) are enriched in low complexity. Gly residues predominate over residues 1145 to 1155 (TFGGPGAGDFF).

This sequence belongs to the peptidase C19 family. PAN2 subfamily. In terms of assembly, forms a heterotrimer with an asymmetric homodimer of the regulatory subunit pan3 to form the poly(A)-nuclease (PAN) deadenylation complex. It depends on a divalent metal cation as a cofactor.

Its subcellular location is the cytoplasm. The catalysed reaction is Exonucleolytic cleavage of poly(A) to 5'-AMP.. Its activity is regulated as follows. Positively regulated by the regulatory subunit pan3. Catalytic subunit of the poly(A)-nuclease (PAN) deadenylation complex, one of two cytoplasmic mRNA deadenylases involved in mRNA turnover. PAN specifically shortens poly(A) tails of RNA and the activity is stimulated by poly(A)-binding protein pab1. PAN deadenylation is followed by rapid degradation of the shortened mRNA tails by the CCR4-NOT complex. Deadenylated mRNAs are then degraded by two alternative mechanisms, namely exosome-mediated 3'-5' exonucleolytic degradation, or deadenylation-dependent mRNA decaping and subsequent 5'-3' exonucleolytic degradation by xrn1. May also be involved in post-transcriptional maturation of mRNA poly(A) tails. The sequence is that of PAN2-PAN3 deadenylation complex catalytic subunit pan2 from Neosartorya fischeri (strain ATCC 1020 / DSM 3700 / CBS 544.65 / FGSC A1164 / JCM 1740 / NRRL 181 / WB 181) (Aspergillus fischerianus).